Here is a 371-residue protein sequence, read N- to C-terminus: Alanine dehydrogenase (371 aa).

Positions 15 and 74 each coordinate substrate. The Proton donor/acceptor role is filled by His-95. NAD(+)-binding positions include Ser-133, 177 to 178, Asp-197, Ser-219, 238 to 239, 266 to 269, and 298 to 301; these read QA, VL, IAID, and VANM. Residue Asp-269 is the Proton donor/acceptor of the active site.

The protein belongs to the AlaDH/PNT family. Homohexamer. Trimer of dimer.

It catalyses the reaction L-alanine + NAD(+) + H2O = pyruvate + NH4(+) + NADH + H(+). Its pathway is amino-acid degradation; L-alanine degradation via dehydrogenase pathway; NH(3) and pyruvate from L-alanine: step 1/1. Its function is as follows. Catalyzes the reversible reductive amination of pyruvate to L-alanine. May play a role in cell wall synthesis as L-alanine is an important constituent of the peptidoglycan layer. This Staphylococcus epidermidis (strain ATCC 35984 / DSM 28319 / BCRC 17069 / CCUG 31568 / BM 3577 / RP62A) protein is Alanine dehydrogenase (ald).